Here is a 403-residue protein sequence, read N- to C-terminus: Phosphoglycerate kinase (403 aa).

Substrate-binding positions include 22 to 24 (DLN), arginine 37, 60 to 63 (HLGR), arginine 119, and arginine 156. ATP is bound by residues lysine 206, glycine 302, glutamate 333, and 359–362 (GGDS).

The protein belongs to the phosphoglycerate kinase family. Monomer.

Its subcellular location is the cytoplasm. It catalyses the reaction (2R)-3-phosphoglycerate + ATP = (2R)-3-phospho-glyceroyl phosphate + ADP. The protein operates within carbohydrate degradation; glycolysis; pyruvate from D-glyceraldehyde 3-phosphate: step 2/5. In Streptomyces coelicolor (strain ATCC BAA-471 / A3(2) / M145), this protein is Phosphoglycerate kinase (pgk).